A 478-amino-acid polypeptide reads, in one-letter code: Ribosomal RNA small subunit methyltransferase F (478 aa).

S-adenosyl-L-methionine is bound by residues 121–127 (ASAPGSK), Glu-145, Asp-172, and Asp-190. Cys-243 serves as the catalytic Nucleophile.

This sequence belongs to the class I-like SAM-binding methyltransferase superfamily. RsmB/NOP family.

The protein localises to the cytoplasm. The enzyme catalyses cytidine(1407) in 16S rRNA + S-adenosyl-L-methionine = 5-methylcytidine(1407) in 16S rRNA + S-adenosyl-L-homocysteine + H(+). Specifically methylates the cytosine at position 1407 (m5C1407) of 16S rRNA. The chain is Ribosomal RNA small subunit methyltransferase F from Shewanella sediminis (strain HAW-EB3).